Consider the following 706-residue polypeptide: Semenogelin-2 (706 aa).

The signal sequence occupies residues 1-23; sequence MKSIILFVLSLLLILEKQAAVMG. Disordered stretches follow at residues 25 to 62, 131 to 156, and 276 to 678; these read KGGS…SKGS, KGGQ…KGIF, and NLNQ…SGAH. Over residues 50–59 the composition is skewed to basic and acidic residues; sequence GQKDKQHTES. Residues 137-151 show a composition bias toward polar residues; sequence HGTQNPSQDQGNSPS. The segment covering 297–308 has biased composition (basic and acidic residues); it reads TEERQPNHEENS. The span at 329–339 shows a compositional bias: polar residues; it reads KSQNQVTIPSQ. A compositionally biased stretch (basic and acidic residues) spans 340 to 349; it reads DQEHGHKENK. The span at 389-399 shows a compositional bias: polar residues; sequence KSQNQVTIPSQ. Residues 400–409 are compositionally biased toward basic and acidic residues; that stretch reads DQEHGHKENK. A compositionally biased stretch (polar residues) spans 449-459; it reads KSQNQVTIPSQ. The span at 460–469 shows a compositional bias: basic and acidic residues; the sequence is DQEHGHKENK. Positions 509–519 are enriched in polar residues; that stretch reads KSQNQVAIPSQ. The span at 520-529 shows a compositional bias: basic and acidic residues; that stretch reads DQEHGHKENK. A compositionally biased stretch (polar residues) spans 569–579; sequence KSQNQVTIPSQ. Positions 580–589 are enriched in basic and acidic residues; the sequence is DQEHGHKENK. 2 stretches are compositionally biased toward polar residues: residues 611-622 and 630-653; these read KDVSQSSLSFQT and SQIQ…NSGK. Residues 654–670 are compositionally biased toward basic and acidic residues; sequence SADREQDLLSHEQEGRY.

It belongs to the semenogelin family. In terms of assembly, interacts with SERPINA5.

The protein resides in the secreted. Functionally, participates in the formation of a gel matrix (sperm coagulum) entrapping the accessory gland secretions and ejaculated spermatozoa. The protein is Semenogelin-2 (SEMG2) of Macaca mulatta (Rhesus macaque).